Here is a 262-residue protein sequence, read N- to C-terminus: Thiazole synthase (262 aa).

The active-site Schiff-base intermediate with DXP is lysine 95. Residues glycine 156, 182 to 183 (AG), and 204 to 205 (NT) contribute to the 1-deoxy-D-xylulose 5-phosphate site.

Belongs to the ThiG family. Homotetramer. Forms heterodimers with either ThiH or ThiS.

The protein resides in the cytoplasm. The enzyme catalyses [ThiS sulfur-carrier protein]-C-terminal-Gly-aminoethanethioate + 2-iminoacetate + 1-deoxy-D-xylulose 5-phosphate = [ThiS sulfur-carrier protein]-C-terminal Gly-Gly + 2-[(2R,5Z)-2-carboxy-4-methylthiazol-5(2H)-ylidene]ethyl phosphate + 2 H2O + H(+). Its pathway is cofactor biosynthesis; thiamine diphosphate biosynthesis. Its function is as follows. Catalyzes the rearrangement of 1-deoxy-D-xylulose 5-phosphate (DXP) to produce the thiazole phosphate moiety of thiamine. Sulfur is provided by the thiocarboxylate moiety of the carrier protein ThiS. In vitro, sulfur can be provided by H(2)S. In Yersinia enterocolitica serotype O:8 / biotype 1B (strain NCTC 13174 / 8081), this protein is Thiazole synthase.